The following is a 160-amino-acid chain: SsrA-binding protein (160 aa).

The disordered stretch occupies residues Tyr-134 to Asp-160.

The protein belongs to the SmpB family.

The protein localises to the cytoplasm. Required for rescue of stalled ribosomes mediated by trans-translation. Binds to transfer-messenger RNA (tmRNA), required for stable association of tmRNA with ribosomes. tmRNA and SmpB together mimic tRNA shape, replacing the anticodon stem-loop with SmpB. tmRNA is encoded by the ssrA gene; the 2 termini fold to resemble tRNA(Ala) and it encodes a 'tag peptide', a short internal open reading frame. During trans-translation Ala-aminoacylated tmRNA acts like a tRNA, entering the A-site of stalled ribosomes, displacing the stalled mRNA. The ribosome then switches to translate the ORF on the tmRNA; the nascent peptide is terminated with the 'tag peptide' encoded by the tmRNA and targeted for degradation. The ribosome is freed to recommence translation, which seems to be the essential function of trans-translation. In Pseudomonas fluorescens (strain SBW25), this protein is SsrA-binding protein.